We begin with the raw amino-acid sequence, 263 residues long: uncharacterized protein (263 aa).

The first 22 residues, 1–22 (MEYLKRLALLISVIILTIFIMG), serve as a signal peptide directing secretion. The N-palmitoyl cysteine moiety is linked to residue Cys-23. Cys-23 carries the S-diacylglycerol cysteine lipid modification.

The protein belongs to the staphylococcal tandem lipoprotein family.

The protein resides in the cell membrane. This is an uncharacterized protein from Staphylococcus aureus (strain COL).